The primary structure comprises 611 residues: Developmental and secondary metabolism regulator veA (611 aa).

Disordered stretches follow at residues 1–57, 222–497, and 511–611; these read MNRK…RPVD, RRRE…ASFD, and LEAS…PGHA. A compositionally biased stretch (polar residues) spans 14-23; it reads KSSATRTTND. The region spanning 24–216 is the Velvet domain; sequence GRAITYEMQV…AEQGCRVRIR (193 aa). Positions 38-43 match the Nuclear localization signal motif; the sequence is QRARAC. Residues 242–254 are compositionally biased toward low complexity; the sequence is AARARASATPDPS. Positions 274-290 are enriched in polar residues; it reads SASNASHQSLGSISRRP. The segment covering 330–340 has biased composition (low complexity); that stretch reads YPPNQFVQQQP. Residues 341-361 are compositionally biased toward pro residues; sequence PMQPPLPQYQPPNYPAPPPPV. The span at 362 to 377 shows a compositional bias: low complexity; it reads TAAQQPQPAQSYYNYP. The span at 419-434 shows a compositional bias: polar residues; that stretch reads RNSQQIPPTSQPTAYT. Low complexity-rich tracts occupy residues 435 to 452 and 461 to 471; these read QPMQ…QHYQ and QASQHSSYSSM. A PEST region spans residues 455-499; it reads PPPPPSQASQHSSYSSMDLYNSRPAPIEPHHHGNTPASKASFDLP. Over residues 511–533 the composition is skewed to polar residues; sequence LEASSPTSVAPTNAYFSGGQTPI.

It belongs to the velvet family. VeA subfamily. Component of the heterotrimeric velvet complex composed of laeA, veA and velB; VeA acting as a bridging protein between laeA and velB.

The protein localises to the nucleus. The protein resides in the cytoplasm. In terms of biological role, component of the velvet transcription factor complex that controls sexual/asexual developmental ratio in response to light, promoting sexual development in the darkness while stimulating asexual sporulation under illumination. The velvet complex hat acts as a global regulator for secondary metabolite gene expression. Controls the expression of the dothistromin gene cluster. Regulates hyphal growth and pigment formation. Acts as a positive regulator of virulence. The sequence is that of Developmental and secondary metabolism regulator veA from Dothistroma septosporum (strain NZE10 / CBS 128990) (Red band needle blight fungus).